Here is a 947-residue protein sequence, read N- to C-terminus: Bifunctional glutamine synthetase adenylyltransferase/adenylyl-removing enzyme (947 aa).

Positions Met1–Glu440 are adenylyl removase. Residues Ser450–Val947 form an adenylyl transferase region.

This sequence belongs to the GlnE family. The cofactor is Mg(2+).

The enzyme catalyses [glutamine synthetase]-O(4)-(5'-adenylyl)-L-tyrosine + phosphate = [glutamine synthetase]-L-tyrosine + ADP. The catalysed reaction is [glutamine synthetase]-L-tyrosine + ATP = [glutamine synthetase]-O(4)-(5'-adenylyl)-L-tyrosine + diphosphate. Its function is as follows. Involved in the regulation of glutamine synthetase GlnA, a key enzyme in the process to assimilate ammonia. When cellular nitrogen levels are high, the C-terminal adenylyl transferase (AT) inactivates GlnA by covalent transfer of an adenylyl group from ATP to specific tyrosine residue of GlnA, thus reducing its activity. Conversely, when nitrogen levels are low, the N-terminal adenylyl removase (AR) activates GlnA by removing the adenylyl group by phosphorolysis, increasing its activity. The regulatory region of GlnE binds the signal transduction protein PII (GlnB) which indicates the nitrogen status of the cell. In Salmonella agona (strain SL483), this protein is Bifunctional glutamine synthetase adenylyltransferase/adenylyl-removing enzyme.